A 296-amino-acid polypeptide reads, in one-letter code: 4-hydroxybenzoate octaprenyltransferase (296 aa).

The next 8 helical transmembrane spans lie at 28–48 (PIGI…AGLG), 52–72 (LANV…GCCI), 102–122 (ALAL…CTNS), 145–167 (TYYP…FTAA), 174–196 (SAWL…YAMV), 219–239 (MIIL…GSRF), 241–261 (LGGW…WEYW), and 275–295 (FLHN…DYAL).

This sequence belongs to the UbiA prenyltransferase family. Mg(2+) serves as cofactor.

The protein resides in the cell inner membrane. It carries out the reaction all-trans-octaprenyl diphosphate + 4-hydroxybenzoate = 4-hydroxy-3-(all-trans-octaprenyl)benzoate + diphosphate. Its pathway is cofactor biosynthesis; ubiquinone biosynthesis. Its function is as follows. Catalyzes the prenylation of para-hydroxybenzoate (PHB) with an all-trans polyprenyl group. Mediates the second step in the final reaction sequence of ubiquinone-8 (UQ-8) biosynthesis, which is the condensation of the polyisoprenoid side chain with PHB, generating the first membrane-bound Q intermediate 3-octaprenyl-4-hydroxybenzoate. This Pseudomonas putida (strain W619) protein is 4-hydroxybenzoate octaprenyltransferase.